Reading from the N-terminus, the 67-residue chain is Large ribosomal subunit protein bL35 (67 aa).

The span at 1 to 16 (MPKMKTKSGAKKRFRV) shows a compositional bias: basic residues. The segment at 1 to 25 (MPKMKTKSGAKKRFRVRPGGTVKRG) is disordered.

The protein belongs to the bacterial ribosomal protein bL35 family.

This is Large ribosomal subunit protein bL35 from Polaromonas sp. (strain JS666 / ATCC BAA-500).